We begin with the raw amino-acid sequence, 400 residues long: Formate-dependent phosphoribosylglycinamide formyltransferase (400 aa).

N(1)-(5-phospho-beta-D-ribosyl)glycinamide is bound by residues Glu-22 to Leu-23 and Glu-82. ATP-binding positions include Arg-115, Lys-156, Ser-161–Gln-166, Glu-196–Ile-199, and Glu-204. In terms of domain architecture, ATP-grasp spans Arg-120 to Leu-309. Mg(2+) contacts are provided by Glu-268 and Glu-280. N(1)-(5-phospho-beta-D-ribosyl)glycinamide-binding positions include Asp-287, Lys-361, and Arg-368 to Arg-369.

Belongs to the PurK/PurT family. In terms of assembly, homodimer.

It carries out the reaction N(1)-(5-phospho-beta-D-ribosyl)glycinamide + formate + ATP = N(2)-formyl-N(1)-(5-phospho-beta-D-ribosyl)glycinamide + ADP + phosphate + H(+). It functions in the pathway purine metabolism; IMP biosynthesis via de novo pathway; N(2)-formyl-N(1)-(5-phospho-D-ribosyl)glycinamide from N(1)-(5-phospho-D-ribosyl)glycinamide (formate route): step 1/1. In terms of biological role, involved in the de novo purine biosynthesis. Catalyzes the transfer of formate to 5-phospho-ribosyl-glycinamide (GAR), producing 5-phospho-ribosyl-N-formylglycinamide (FGAR). Formate is provided by PurU via hydrolysis of 10-formyl-tetrahydrofolate. This is Formate-dependent phosphoribosylglycinamide formyltransferase from Xanthomonas euvesicatoria pv. vesicatoria (strain 85-10) (Xanthomonas campestris pv. vesicatoria).